The primary structure comprises 199 residues: Shikimate kinase (199 aa).

14–19 (GSGKST) provides a ligand contact to ATP. A Mg(2+)-binding site is contributed by serine 18. Substrate is bound by residues aspartate 36, arginine 60, and glycine 82. Arginine 120 provides a ligand contact to ATP. Substrate is bound at residue arginine 147.

This sequence belongs to the shikimate kinase family. Monomer. Requires Mg(2+) as cofactor.

Its subcellular location is the cytoplasm. The enzyme catalyses shikimate + ATP = 3-phosphoshikimate + ADP + H(+). The protein operates within metabolic intermediate biosynthesis; chorismate biosynthesis; chorismate from D-erythrose 4-phosphate and phosphoenolpyruvate: step 5/7. Its function is as follows. Catalyzes the specific phosphorylation of the 3-hydroxyl group of shikimic acid using ATP as a cosubstrate. This chain is Shikimate kinase, found in Chlorobium limicola (strain DSM 245 / NBRC 103803 / 6330).